Reading from the N-terminus, the 132-residue chain is Small ribosomal subunit protein uS12 (132 aa).

Position 89 is a 3-methylthioaspartic acid (Asp-89).

The protein belongs to the universal ribosomal protein uS12 family. As to quaternary structure, part of the 30S ribosomal subunit. Contacts proteins S8 and S17. May interact with IF1 in the 30S initiation complex.

In terms of biological role, with S4 and S5 plays an important role in translational accuracy. Interacts with and stabilizes bases of the 16S rRNA that are involved in tRNA selection in the A site and with the mRNA backbone. Located at the interface of the 30S and 50S subunits, it traverses the body of the 30S subunit contacting proteins on the other side and probably holding the rRNA structure together. The combined cluster of proteins S8, S12 and S17 appears to hold together the shoulder and platform of the 30S subunit. The polypeptide is Small ribosomal subunit protein uS12 (Campylobacter curvus (strain 525.92)).